Consider the following 1282-residue polypeptide: Protein PIR (1282 aa).

Binds NAP1 and ROP2, but not ROP8. In terms of tissue distribution, expressed in roots, root hairs, hypocotyls, cotyledons, stems, leaves, trichomes and flowers.

Involved in regulation of actin and microtubule organization. Part of a WAVE complex that activates the ARP2/3 complex. Interacts with the active form of RHO-family GTPases. The sequence is that of Protein PIR (PIR) from Arabidopsis thaliana (Mouse-ear cress).